Consider the following 617-residue polypeptide: Probable Xaa-Pro aminopeptidase P (617 aa).

Mn(2+) contacts are provided by D414, D425, E523, and E537.

It belongs to the peptidase M24B family. It depends on Mn(2+) as a cofactor.

It catalyses the reaction Release of any N-terminal amino acid, including proline, that is linked to proline, even from a dipeptide or tripeptide.. Its function is as follows. Catalyzes the removal of a penultimate prolyl residue from the N-termini of peptides. This Ajellomyces capsulatus (strain G186AR / H82 / ATCC MYA-2454 / RMSCC 2432) (Darling's disease fungus) protein is Probable Xaa-Pro aminopeptidase P (AMPP).